Here is a 248-residue protein sequence, read N- to C-terminus: Secreted and transmembrane protein 1 (248 aa).

Residues 1–28 (MQTCPLAFPGHVSQALGTLLFLAASLSA) form the signal peptide. The Extracellular segment spans residues 29–145 (QNEGWDSPIC…AEPQSAPDTG (117 aa)). A disulfide bridge connects residues Cys-38 and Cys-55. An N-linked (GlcNAc...) asparagine glycan is attached at Asn-56. The chain crosses the membrane as a helical span at residues 146–166 (FWPVPAVVTAVFILLVALVMF). Over 167–248 (AWYRCRCSQQ…QPLFPYAADP (82 aa)) the chain is Cytoplasmic.

Belongs to the SECTM family. As to quaternary structure, interacts with CD7. In terms of tissue distribution, detected at the highest levels in peripheral blood leukocytes and breast cancer cell lines. Found in leukocytes of the myeloid lineage, with the strongest expression observed in granulocytes and no detectable expression in lymphocytes. Expressed in thymic epithelial cells and fibroblasts.

Its subcellular location is the cell membrane. It is found in the secreted. Its function is as follows. May be involved in thymocyte signaling. This is Secreted and transmembrane protein 1 (SECTM1) from Homo sapiens (Human).